We begin with the raw amino-acid sequence, 506 residues long: Cytochrome P450 6a8 (506 aa).

Cys-451 provides a ligand contact to heme.

It belongs to the cytochrome P450 family. It depends on heme as a cofactor.

The protein resides in the endoplasmic reticulum membrane. Its subcellular location is the microsome membrane. Functionally, involved in the metabolism of insect hormones and in the breakdown of synthetic insecticides. In Drosophila melanogaster (Fruit fly), this protein is Cytochrome P450 6a8 (Cyp6a8).